Reading from the N-terminus, the 61-residue chain is MRPPTQPLTQALPFSLRDALRGTGLQVPVIKMGTGWEGMYRTLKEVAYILLCCWCIKELLD.

The sequence is that of Lens epithelial cell protein LEP503 (Lenep) from Mus musculus (Mouse).